The sequence spans 520 residues: AAA-ATPase At5g57480 (520 aa).

An N-terminal signal peptide occupies residues 1-24; that stretch reads MKEYWTSLASLLGVLAFCQSLMQS. Position 244–251 (244–251) interacts with ATP; the sequence is GPPGTGKS. Disordered regions lie at residues 307–340 and 467–520; these read KKNS…EEGG and NVKD…TRED. Residues 328–340 are compositionally biased toward gly residues; sequence SGSGSGGSGEEGG. A compositionally biased stretch (acidic residues) spans 497–512; sequence QNEDEDHDEEEIELED.

The protein belongs to the AAA ATPase family. BCS1 subfamily. It depends on Mg(2+) as a cofactor.

The enzyme catalyses ATP + H2O = ADP + phosphate + H(+). The protein is AAA-ATPase At5g57480 of Arabidopsis thaliana (Mouse-ear cress).